The chain runs to 142 residues: HTH-type transcriptional regulator MntR (142 aa).

In terms of domain architecture, HTH dtxR-type spans 1-63 (MPTPSMEDYI…YEKYRGLILT (63 aa)). Mn(2+) is bound by residues aspartate 8, glutamate 11, histidine 77, glutamate 99, glutamate 102, and histidine 103.

The protein belongs to the DtxR/MntR family. As to quaternary structure, homodimer.

It localises to the cytoplasm. With respect to regulation, DNA binding is strongly activated by Mn(2+). Central regulator of manganese homeostasis. This chain is HTH-type transcriptional regulator MntR, found in Listeria monocytogenes serotype 4b (strain CLIP80459).